A 474-amino-acid chain; its full sequence is Glutamate--tRNA ligase 1 (474 aa).

A 'HIGH' region motif is present at residues 10–20 (PSPTGFLHIGG). The 'KMSKS' region motif lies at 239–243 (KLSKR). Position 242 (Lys242) interacts with ATP.

The protein belongs to the class-I aminoacyl-tRNA synthetase family. Glutamate--tRNA ligase type 1 subfamily. As to quaternary structure, monomer.

The protein localises to the cytoplasm. It catalyses the reaction tRNA(Glu) + L-glutamate + ATP = L-glutamyl-tRNA(Glu) + AMP + diphosphate. Functionally, catalyzes the attachment of glutamate to tRNA(Glu) in a two-step reaction: glutamate is first activated by ATP to form Glu-AMP and then transferred to the acceptor end of tRNA(Glu). The polypeptide is Glutamate--tRNA ligase 1 (Methylobacterium sp. (strain 4-46)).